The following is a 190-amino-acid chain: Glycine cleavage system transcriptional repressor (190 aa).

ACT domains follow at residues 10-91 (VITA…PRPP) and 97-176 (WVQV…GSIN).

The protein localises to the cytoplasm. Functionally, negative transcriptional regulator of the glycine cleavage system operon (GCV). Does not autoregulate its own expression. It is not yet known how GcvR acts as a repressor. It does not seem to bind DNA. It could interact with GcvA and suppress its activatory activity. This chain is Glycine cleavage system transcriptional repressor (gcvR), found in Escherichia coli (strain K12).